The following is a 95-amino-acid chain: Mitochondrial import inner membrane translocase subunit Tim13 (95 aa).

The Twin CX3C motif motif lies at 46-69 (CFKKCIGKPGSTLDNSEQKCIAMC). 2 cysteine pairs are disulfide-bonded: Cys-46–Cys-69 and Cys-50–Cys-65.

This sequence belongs to the small Tim family. As to quaternary structure, heterohexamer; composed of 3 copies of TIMM8 (TIMM8A or TIMM8B) and 3 copies of TIMM13, named soluble 70 kDa complex. Associates with the TIM22 complex, whose core is composed of TIMM22.

The protein localises to the mitochondrion inner membrane. In terms of biological role, mitochondrial intermembrane chaperone that participates in the import and insertion of some multi-pass transmembrane proteins into the mitochondrial inner membrane. Also required for the transfer of beta-barrel precursors from the TOM complex to the sorting and assembly machinery (SAM complex) of the outer membrane. Acts as a chaperone-like protein that protects the hydrophobic precursors from aggregation and guide them through the mitochondrial intermembrane space. The TIMM8-TIMM13 complex mediates the import of some proteins while the predominant TIMM9-TIMM10 70 kDa complex mediates the import of much more proteins. The polypeptide is Mitochondrial import inner membrane translocase subunit Tim13 (timm13) (Danio rerio (Zebrafish)).